Consider the following 323-residue polypeptide: Ubiquinone biosynthesis protein COQ4, mitochondrial (323 aa).

Residues His-209, Asp-210, His-213, and Glu-225 each coordinate Zn(2+).

Belongs to the COQ4 family. Component of a multi-subunit COQ enzyme complex, composed of at least COQ3, COQ4, COQ5, COQ6, COQ7 and COQ9. It depends on Zn(2+) as a cofactor.

It localises to the mitochondrion inner membrane. The enzyme catalyses a 4-hydroxy-3-methoxy-5-(all-trans-polyprenyl)benzoate + H(+) = a 2-methoxy-6-(all-trans-polyprenyl)phenol + CO2. It functions in the pathway cofactor biosynthesis; ubiquinone biosynthesis. Functionally, lyase that catalyzes the C1-decarboxylation of 4-hydroxy-3-methoxy-5-(all-trans-polyprenyl)benzoic acid into 2-methoxy-6-(all-trans-polyprenyl)phenol during ubiquinone biosynthesis. The protein is Ubiquinone biosynthesis protein COQ4, mitochondrial of Debaryomyces hansenii (strain ATCC 36239 / CBS 767 / BCRC 21394 / JCM 1990 / NBRC 0083 / IGC 2968) (Yeast).